The chain runs to 519 residues: Membrane-bound glycerophospholipid O-acyltransferase 2 (519 aa).

6 helical membrane-spanning segments follow: residues 22-42, 61-81, 88-108, 184-204, 236-256, and 288-305; these read PIDQ…AVWF, TLLG…HFLV, CIMI…FALG, FMGI…FIEG, LLVC…LPVE, and YFAW…GFGF. Active-site residues include Asn-341 and His-372. 3 helical membrane-spanning segments follow: residues 365 to 385, 415 to 435, and 443 to 463; these read FFLS…FLTG, IITW…FVLL, and FYRS…LLLP.

This sequence belongs to the membrane-bound acyltransferase family.

It is found in the endoplasmic reticulum membrane. It carries out the reaction a 1-acyl-sn-glycero-3-phosphocholine + an acyl-CoA = a 1,2-diacyl-sn-glycero-3-phosphocholine + CoA. It catalyses the reaction a 1-acyl-sn-glycero-3-phosphoethanolamine + an acyl-CoA = a 1,2-diacyl-sn-glycero-3-phosphoethanolamine + CoA. The catalysed reaction is a 1-acyl-sn-glycero-3-phosphate + an acyl-CoA = a 1,2-diacyl-sn-glycero-3-phosphate + CoA. The enzyme catalyses (9Z)-hexadecenoyl-CoA + 1-hexadecanoyl-sn-glycero-3-phosphocholine = 1-hexadecanoyl-2-(9Z-hexadecenoyl)-sn-glycero-3-phosphocholine + CoA. It carries out the reaction 1-hexadecanoyl-sn-glycero-3-phosphoethanolamine + (9Z)-octadecenoyl-CoA = 1-hexadecanoyl-2-(9Z-octadecenoyl)-sn-glycero-3-phosphoethanolamine + CoA. It catalyses the reaction 1-hexadecanoyl-sn-glycero-3-phosphoethanolamine + (9Z)-hexadecenoyl-CoA = 1-hexadecanoyl-2-(9Z)-hexadecenoyl-sn-glycero-3-phosphoethanolamine + CoA. The catalysed reaction is 1-(9Z-octadecenoyl)-sn-glycero-3-phospho-L-serine + hexadecanoyl-CoA = 1-(9Z)-octadecenoyl-2-hexadecanoyl-sn-glycero-3-phosphoserine + CoA. The enzyme catalyses (9Z,12Z)-octadecadienoyl-CoA + 1-hexadecanoyl-sn-glycero-3-phosphocholine = 1-hexadecanoyl-2-(9Z,12Z-octadecadienoyl)-sn-glycero-3-phosphocholine + CoA. It carries out the reaction 1-hexadecanoyl-sn-glycero-3-phosphocholine + (9Z)-octadecenoyl-CoA = 1-hexadecanoyl-2-(9Z-octadecenoyl)-sn-glycero-3-phosphocholine + CoA. It catalyses the reaction 1-hexadecanoyl-sn-glycero-3-phosphate + (9Z)-hexadecenoyl-CoA = 1-hexadecanoyl-2-[(9Z)-hexadec-9-enoyl]-sn-glycero-3-phosphate + CoA. The catalysed reaction is 1-hexadecanoyl-sn-glycero-3-phosphate + (9Z)-octadecenoyl-CoA = 1-hexadecanoyl-2-(9Z-octadecenoyl)-sn-glycero-3-phosphate + CoA. The enzyme catalyses a 1-O-(1Z-alkenyl)-sn-glycero-3-phosphocholine + (9Z)-octadecenoyl-CoA = 1-O-(1Z)-alkenyl-2-(9Z)-octadecenoyl-sn-glycero-3-phosphocholine + CoA. It carries out the reaction a 1-O-(1Z-alkenyl)-sn-glycero-3-phosphoethanolamine + (9Z)-octadecenoyl-CoA = 1-O-(1Z)-alkenyl-2-(9Z)-octadecenoyl-sn-glycero-3-phosphoethanolamine + CoA. It catalyses the reaction 1-octadecanoyl-sn-glycero-3-phosphoethanolamine + (9Z)-octadecenoyl-CoA = 1-octadecanoyl-2-(9Z-octadecenoyl)-sn-glycero-3-phosphoethanolamine + CoA. The catalysed reaction is 1-octadecanoyl-sn-glycero-3-phosphocholine + (9Z)-octadecenoyl-CoA = 1-octadecanoyl-2-(9Z-octadecenoyl)-sn-glycero-3-phosphocholine + CoA. The enzyme catalyses 1-(9Z-octadecenoyl)-sn-glycero-3-phosphoethanolamine + (9Z)-octadecenoyl-CoA = 1,2-di-(9Z-octadecenoyl)-sn-glycero-3-phosphoethanolamine + CoA. It participates in lipid metabolism; phospholipid metabolism. With respect to regulation, partially inhibited by thimerosal. Its function is as follows. Acyltransferase which catalyzes the transfer of an acyl group from an acyl-CoA to a lysophospholipid leading to the production of a phospholipid and participates in the reacylation step of the phospholipid remodeling pathway also known as the Lands cycle. May catalyze preferentially the acylation of lysophosphatidylethanolamine (1-acyl-sn-glycero-3-phosphoethanolamine or LPE) and lysophosphatidic acid (LPA) and to a lesser extend lysophosphatidylcholine (LPC) and lysophosphatidylserine (LPS). Prefers oleoyl-CoA as the acyl donor. May be involved in chondrocyte differentiation. This chain is Membrane-bound glycerophospholipid O-acyltransferase 2, found in Rattus norvegicus (Rat).